The primary structure comprises 152 residues: Small ribosomal subunit protein uS11B (152 aa).

The tract at residues 131–152 (EDVTPIPSDSTRRKGGRRGRRL) is disordered. Residues 143 to 152 (RKGGRRGRRL) show a composition bias toward basic residues.

Belongs to the universal ribosomal protein uS11 family.

This is Small ribosomal subunit protein uS11B from Anopheles gambiae (African malaria mosquito).